We begin with the raw amino-acid sequence, 378 residues long: Heme chaperone HemW (378 aa).

One can recognise a Radical SAM core domain in the interval 1–237; that stretch reads MVKLPPLSLY…LTAAGYQQYE (237 aa). Position 10 (Tyr-10) interacts with S-adenosyl-L-methionine. [4Fe-4S] cluster contacts are provided by Cys-16, Cys-20, and Cys-23. S-adenosyl-L-methionine contacts are provided by residues Gly-66, 67-68, Glu-99, Gln-126, Arg-138, and Asp-163; that span reads GT.

It belongs to the anaerobic coproporphyrinogen-III oxidase family. HemW subfamily. As to quaternary structure, binding of the [4Fe-4S] cofactor promotes dimerization. Requires [4Fe-4S] cluster as cofactor.

The protein localises to the cytoplasm. Functionally, probably acts as a heme chaperone, transferring heme to the NarI subunit of the respiratory enzyme nitrate reductase; transfer may be stimulated by NADH. Binds one molecule of heme per monomer, possibly covalently. Heme binding is not affected by either [4Fe-4S] or S-adenosyl-L-methionine (SAM)-binding. Does not have coproporphyrinogen III dehydrogenase activity in vitro. Binds 1 [4Fe-4S] cluster. The cluster is coordinated with 3 cysteines and an exchangeable S-adenosyl-L-methionine. The sequence is that of Heme chaperone HemW from Escherichia coli (strain K12).